A 502-amino-acid chain; its full sequence is ATP synthase subunit alpha (502 aa).

169–176 (GDRQTGKT) contributes to the ATP binding site.

Belongs to the ATPase alpha/beta chains family. F-type ATPases have 2 components, CF(1) - the catalytic core - and CF(0) - the membrane proton channel. CF(1) has five subunits: alpha(3), beta(3), gamma(1), delta(1), epsilon(1). CF(0) has three main subunits: a(1), b(2) and c(9-12). The alpha and beta chains form an alternating ring which encloses part of the gamma chain. CF(1) is attached to CF(0) by a central stalk formed by the gamma and epsilon chains, while a peripheral stalk is formed by the delta and b chains.

The protein localises to the cell inner membrane. The enzyme catalyses ATP + H2O + 4 H(+)(in) = ADP + phosphate + 5 H(+)(out). Its function is as follows. Produces ATP from ADP in the presence of a proton gradient across the membrane. The alpha chain is a regulatory subunit. This is ATP synthase subunit alpha from Nitratidesulfovibrio vulgaris (strain DSM 19637 / Miyazaki F) (Desulfovibrio vulgaris).